A 234-amino-acid chain; its full sequence is Fibronectin type III domain-containing protein 4 (234 aa).

Residues 1–44 (MPSGCHSSPPSGLRGDMASLVPLSPYLSPTVLLLVSCDLGFVRA) form the signal peptide. Residues 45–167 (DRPPSPVNVT…GLDGERPLQT (123 aa)) lie on the Extracellular side of the membrane. In terms of domain architecture, Fibronectin type-III spans 47–140 (PPSPVNVTVT…PRVHFRTLKG (94 aa)). N-linked (GlcNAc...) asparagine glycans are attached at residues N52, N97, and N147. Residues 122-160 (GLRGESPPGPRVHFRTLKGSDRLPSNSSSPGDITVEGLD) are disordered. Residues 168-188 (GEVVIIVVVLLMWAAVIGLFC) form a helical membrane-spanning segment. Over 189–234 (RQYDIIKDNDSNNNPKEKGKGPEQSPQGRPVGTRQKKSPSINTIDV) the chain is Cytoplasmic. Positions 197–209 (NDSNNNPKEKGKG) are enriched in basic and acidic residues. Residues 197 to 234 (NDSNNNPKEKGKGPEQSPQGRPVGTRQKKSPSINTIDV) are disordered.

In terms of tissue distribution, highly expressed in the liver and the brain, including in the cortex, hypothalamus and hippocampus. Also expressed in adipose tissue.

It localises to the membrane. The protein resides in the secreted. Has anti-inflammatory properties. In the colon, acts on macrophages to down-regulate inflammation. May suppress osteoclastogenesis and mature osteoclast resorptive function. In white adipose tissue, decreases local inflammation, via interaction with GPR116. Also required for proper systemic glucose tolerance, specifically sensitizing white adipocytes to insulin and promoting glucose uptake. The insulin sensitizing function in adipose tissue is mediated by interaction with ADGRF5/GPR116 and activation of cAMP signaling. The chain is Fibronectin type III domain-containing protein 4 (FNDC4) from Homo sapiens (Human).